A 693-amino-acid polypeptide reads, in one-letter code: Protein-glutamine gamma-glutamyltransferase E (693 aa).

Ala-2 carries the N-acetylalanine modification. A Phosphotyrosine modification is found at Tyr-111. Position 112 is a phosphothreonine (Thr-112). 5 residues coordinate Ca(2+): Ala-222, Asn-225, Asn-227, Asp-228, and Asn-230. Residue Cys-273 is part of the active site. Residues Asp-302, Asp-304, Asn-306, Ser-308, and Asp-325 each contribute to the Ca(2+) site. Residues His-331 and Asp-354 contribute to the active site. Ca(2+)-binding residues include Asn-394, Ser-416, Glu-444, and Glu-449.

This sequence belongs to the transglutaminase superfamily. Transglutaminase family. In terms of assembly, consists of two polypeptide chains, which are synthesized as a precursor form of a single polypeptide. The cofactor is Ca(2+). In terms of processing, activated by proteolytic processing. In vitro activation is commonly achieved by cleavage with dispase, a neutral bacterial protease. Dispase cleavage site was proposed to lie between Ser-470 and Ser-471 or between Pro-465 and Phe-466. Physiological activation may be catalyzed by CTSL and, to a lesser extent, by CTSS, but not by CTSB, CTSD nor CTSV.

The protein localises to the cytoplasm. It catalyses the reaction L-glutaminyl-[protein] + L-lysyl-[protein] = [protein]-L-lysyl-N(6)-5-L-glutamyl-[protein] + NH4(+). Its function is as follows. Catalyzes the calcium-dependent formation of isopeptide cross-links between glutamine and lysine residues in various proteins, as well as the conjugation of polyamines to proteins. Involved in the formation of the cornified envelope (CE), a specialized component consisting of covalent cross-links of proteins beneath the plasma membrane of terminally differentiated keratinocytes. Catalyzes small proline-rich proteins (SPRR1 and SPRR2) and LOR cross-linking to form small interchain oligomers, which are further cross-linked by TGM1 onto the growing CE scaffold. In hair follicles, involved in cross-linking structural proteins to hardening the inner root sheath. This Homo sapiens (Human) protein is Protein-glutamine gamma-glutamyltransferase E (TGM3).